Consider the following 352-residue polypeptide: Thiamine-phosphate synthase (352 aa).

The segment at 1 to 128 (MNPTPSETSL…AAEAAAIRYG (128 aa)) is unknown. The tract at residues 63-85 (SYKQARSTSTDTGAGLKHPAQLD) is disordered. The segment at 129-352 (LYDLEVTCLN…LLQQLDQATI (224 aa)) is thiamine-phosphate synthase. Residues 180 to 184 (QYRCK) and Asn-212 each bind 4-amino-2-methyl-5-(diphosphooxymethyl)pyrimidine. Positions 213 and 232 each coordinate Mg(2+). 4-amino-2-methyl-5-(diphosphooxymethyl)pyrimidine is bound by residues Ser-251 and Lys-280. Gly-307 lines the 2-[(2R,5Z)-2-carboxy-4-methylthiazol-5(2H)-ylidene]ethyl phosphate pocket.

This sequence belongs to the thiamine-phosphate synthase family. It depends on Mg(2+) as a cofactor.

It carries out the reaction 2-[(2R,5Z)-2-carboxy-4-methylthiazol-5(2H)-ylidene]ethyl phosphate + 4-amino-2-methyl-5-(diphosphooxymethyl)pyrimidine + 2 H(+) = thiamine phosphate + CO2 + diphosphate. The catalysed reaction is 2-(2-carboxy-4-methylthiazol-5-yl)ethyl phosphate + 4-amino-2-methyl-5-(diphosphooxymethyl)pyrimidine + 2 H(+) = thiamine phosphate + CO2 + diphosphate. It catalyses the reaction 4-methyl-5-(2-phosphooxyethyl)-thiazole + 4-amino-2-methyl-5-(diphosphooxymethyl)pyrimidine + H(+) = thiamine phosphate + diphosphate. Its pathway is cofactor biosynthesis; thiamine diphosphate biosynthesis; thiamine phosphate from 4-amino-2-methyl-5-diphosphomethylpyrimidine and 4-methyl-5-(2-phosphoethyl)-thiazole: step 1/1. Condenses 4-methyl-5-(beta-hydroxyethyl)thiazole monophosphate (THZ-P) and 2-methyl-4-amino-5-hydroxymethyl pyrimidine pyrophosphate (HMP-PP) to form thiamine monophosphate (TMP). This Synechococcus sp. (strain CC9605) protein is Thiamine-phosphate synthase.